The chain runs to 444 residues: Dihydroorotate dehydrogenase (quinone), mitochondrial (444 aa).

A helical transmembrane segment spans residues 34-56 (GGASRYIIGTASVLVGAMAGFYI). Residues 124-128 (AGLDK) and Thr-148 contribute to the FMN site. Residue Lys-128 participates in substrate binding. Residue 173–177 (NRYGF) coordinates substrate. Residues Asn-220 and Asn-250 each contribute to the FMN site. Residue 250 to 255 (NVSSPN) coordinates substrate. Residue Ser-253 is the Nucleophile of the active site. Residues Lys-301 and Ser-329 each contribute to the FMN site. 330 to 331 (NT) is a binding site for substrate. FMN contacts are provided by residues Gly-355, Gly-385, and 406–407 (YT).

This sequence belongs to the dihydroorotate dehydrogenase family. Type 2 subfamily. It depends on FMN as a cofactor.

It is found in the mitochondrion inner membrane. The enzyme catalyses (S)-dihydroorotate + a quinone = orotate + a quinol. The protein operates within pyrimidine metabolism; UMP biosynthesis via de novo pathway; orotate from (S)-dihydroorotate (quinone route): step 1/1. Catalyzes the conversion of dihydroorotate to orotate with quinone as electron acceptor. This Eremothecium gossypii (strain ATCC 10895 / CBS 109.51 / FGSC 9923 / NRRL Y-1056) (Yeast) protein is Dihydroorotate dehydrogenase (quinone), mitochondrial (URA9).